The chain runs to 473 residues: 3-isopropylmalate dehydratase large subunit 2 (473 aa).

[4Fe-4S] cluster is bound by residues Cys350, Cys410, and Cys413.

The protein belongs to the aconitase/IPM isomerase family. LeuC type 1 subfamily. As to quaternary structure, heterodimer of LeuC and LeuD. Requires [4Fe-4S] cluster as cofactor.

It carries out the reaction (2R,3S)-3-isopropylmalate = (2S)-2-isopropylmalate. Its pathway is amino-acid biosynthesis; L-leucine biosynthesis; L-leucine from 3-methyl-2-oxobutanoate: step 2/4. Catalyzes the isomerization between 2-isopropylmalate and 3-isopropylmalate, via the formation of 2-isopropylmaleate. In Salmonella typhimurium (strain LT2 / SGSC1412 / ATCC 700720), this protein is 3-isopropylmalate dehydratase large subunit 2.